We begin with the raw amino-acid sequence, 172 residues long: Large ribosomal subunit protein uL10 (172 aa).

It belongs to the universal ribosomal protein uL10 family. As to quaternary structure, part of the ribosomal stalk of the 50S ribosomal subunit. The N-terminus interacts with L11 and the large rRNA to form the base of the stalk. The C-terminus forms an elongated spine to which L12 dimers bind in a sequential fashion forming a multimeric L10(L12)X complex.

Forms part of the ribosomal stalk, playing a central role in the interaction of the ribosome with GTP-bound translation factors. The polypeptide is Large ribosomal subunit protein uL10 (Chlamydia trachomatis serovar A (strain ATCC VR-571B / DSM 19440 / HAR-13)).